We begin with the raw amino-acid sequence, 590 residues long: Polypeptide N-acetylgalactosaminyltransferase 8 (590 aa).

At 1–11 (MCLDIWRHKKK) the chain is on the cytoplasmic side. A helical; Signal-anchor for type II membrane protein transmembrane segment spans residues 12–31 (VLPLLLLMAIGSIIYYLYTL). Topologically, residues 32–590 (KLEGERDESA…QHFWDNVKTQ (559 aa)) are lumenal. N-linked (GlcNAc...) asparagine glycosylation occurs at Asn-77. 5 disulfides stabilise this stretch: Cys-117/Cys-345, Cys-336/Cys-419, Cys-459/Cys-475, Cys-502/Cys-517, and Cys-546/Cys-561. The tract at residues 127 to 236 (LPSVSVVITY…KGWLEPLIAP (110 aa)) is catalytic subdomain A. Asp-168 contacts substrate. Residue Asp-220 coordinates Mn(2+). Ser-221 lines the substrate pocket. His-222 contributes to the Mn(2+) binding site. An N-linked (GlcNAc...) asparagine glycan is attached at Asn-241. Residues 291 to 353 (PHKNPIMNGG…PCSRVGHLFR (63 aa)) are catalytic subdomain B. Substrate is bound at residue Trp-322. Residue His-350 coordinates Mn(2+). Arg-353 is a substrate binding site. One can recognise a Ricin B-type lectin domain in the interval 446–573 (ASGVLQSISS…KNHKQQWKFG (128 aa)).

This sequence belongs to the glycosyltransferase 2 family. GalNAc-T subfamily. It depends on Mn(2+) as a cofactor. As to expression, expressed in developing oocytes and egg chambers. During embryonic stages 9-11, expressed in the primordium of the foregut, midgut and hindgut. During embryonic stages 12-13, expressed in the posterior midgut and hindgut. During embryonic stages 14-15, expression continues in the hindgut. No expression detected during embryonic stages 16-17 or in third instar larvae imaginal disks.

The protein localises to the golgi apparatus membrane. It catalyses the reaction L-seryl-[protein] + UDP-N-acetyl-alpha-D-galactosamine = a 3-O-[N-acetyl-alpha-D-galactosaminyl]-L-seryl-[protein] + UDP + H(+). It carries out the reaction L-threonyl-[protein] + UDP-N-acetyl-alpha-D-galactosamine = a 3-O-[N-acetyl-alpha-D-galactosaminyl]-L-threonyl-[protein] + UDP + H(+). It functions in the pathway protein modification; protein glycosylation. Its function is as follows. Catalyzes the initial reaction in O-linked oligosaccharide biosynthesis, the transfer of an N-acetyl-D-galactosamine residue to a serine or threonine residue on the protein receptor. It can both act as a peptide transferase that transfers GalNAc onto unmodified peptide substrates, and as a glycopeptide transferase that requires the prior addition of a GalNAc on a peptide before adding additional GalNAc moieties. Prefers both EA2 and the diglycosylated Muc5AC-3/13 as substrates, albeit at very low levels fro Muc5AC-3/13. This is Polypeptide N-acetylgalactosaminyltransferase 8 from Drosophila melanogaster (Fruit fly).